The sequence spans 240 residues: Adenosylcobinamide-GDP ribazoletransferase (240 aa).

Transmembrane regions (helical) follow at residues 31 to 51 (LLYY…ASHL), 57 to 77 (APLH…ALHL), 109 to 129 (IAVV…WVLV), 133 to 153 (VGAQ…GLFL), and 185 to 205 (LFCL…FAWL).

It belongs to the CobS family. Mg(2+) is required as a cofactor.

The protein localises to the cell inner membrane. The catalysed reaction is alpha-ribazole + adenosylcob(III)inamide-GDP = adenosylcob(III)alamin + GMP + H(+). It catalyses the reaction alpha-ribazole 5'-phosphate + adenosylcob(III)inamide-GDP = adenosylcob(III)alamin 5'-phosphate + GMP + H(+). It participates in cofactor biosynthesis; adenosylcobalamin biosynthesis; adenosylcobalamin from cob(II)yrinate a,c-diamide: step 7/7. Joins adenosylcobinamide-GDP and alpha-ribazole to generate adenosylcobalamin (Ado-cobalamin). Also synthesizes adenosylcobalamin 5'-phosphate from adenosylcobinamide-GDP and alpha-ribazole 5'-phosphate. The sequence is that of Adenosylcobinamide-GDP ribazoletransferase from Pseudomonas putida (strain GB-1).